Reading from the N-terminus, the 266-residue chain is uncharacterized protein (266 aa).

The protein belongs to the chlamydial CPn_0087/CT_309/TC_0583 family.

This is an uncharacterized protein from Chlamydia trachomatis serovar D (strain ATCC VR-885 / DSM 19411 / UW-3/Cx).